The following is a 1060-amino-acid chain: Bumetanide-sensitive sodium-(potassium)-chloride cotransporter (1060 aa).

The Cytoplasmic portion of the chain corresponds to 1-122; the sequence is MNDENRFNVS…KSPTPAVGIK (122 aa). Helical transmembrane passes span 123–143 and 154–174; these read LGWIQGVFIPCLLNIWGVMLF and GIGLSLVIIAISAIVCVITTL. The Cytoplasmic portion of the chain corresponds to 175 to 197; it reads SMSAICTNGEVKGGGIYYIISRS. 2 consecutive transmembrane segments (helical) span residues 198–218 and 250–270; these read LGPEFGASVGIIFAFANAVAA and IVGTVALLVMCIICAIGMDWE. The Cytoplasmic portion of the chain corresponds to 271–275; it reads SKAQN. The next 2 helical transmembrane spans lie at 276–296 and 332–352; these read FLIAIIVGAMVDFVVGTIMGP and FFSVFAIFFPSVTGIQAGANI. The Cytoplasmic portion of the chain corresponds to 353 to 367; the sequence is SGDLKDPASAIPKGT. A helical membrane pass occupies residues 368–388; sequence LLALLISMVSYTLMVLFAGGG. Residues asparagine 396, asparagine 404, and asparagine 419 are each glycosylated (N-linked (GlcNAc...) asparagine). A helical transmembrane segment spans residues 432–452; that stretch reads VMQLMSAWGPFIYGGCWAATL. The Cytoplasmic segment spans residues 453–497; that stretch reads STALTNLLSVPRLIQALGVDRIYPGLIFFSKPYGRHGEPYRGYVL. Transmembrane regions (helical) follow at residues 498-518 and 563-583; these read TFFVSLLFLLIADLNTIAPLI and CVAIMLLVHWVMSLVTFAIFF. At 584 to 642 the chain is on the cytoplasmic side; the sequence is TLYLIVHYRRPDVNWGSSTQAQMYKTALSSAHALARTGEHVKNYWPQLLVLAGRPQARP. Residues 643-663 form a helical membrane-spanning segment; that stretch reads ALVDLGNLISKAGSLMIVGDI. The N-linked (GlcNAc...) asparagine glycan is linked to asparagine 816. A helical transmembrane segment spans residues 882-902; it reads TLDVWWLYDDGGLTILLPYII. The Cytoplasmic portion of the chain corresponds to 903 to 1060; it reads SQRSAWANCK…NHTSVLTFYS (158 aa).

Belongs to the SLC12A transporter family.

It is found in the membrane. Electrically silent transporter system. Mediates sodium and chloride reabsorption. Plays a vital role in the regulation of ionic balance and cell volume. The chain is Bumetanide-sensitive sodium-(potassium)-chloride cotransporter from Manduca sexta (Tobacco hawkmoth).